A 440-amino-acid polypeptide reads, in one-letter code: Diaminopimelate decarboxylase (440 aa).

Lys61 carries the post-translational modification N6-(pyridoxal phosphate)lysine. Pyridoxal 5'-phosphate-binding positions include Gly234 and 275 to 278; that span reads EPGR. Substrate contacts are provided by Arg278, Arg314, and Tyr318. Cys348 acts as the Proton donor in catalysis. Residues Glu349 and Tyr384 each contribute to the substrate site. Tyr384 contributes to the pyridoxal 5'-phosphate binding site. Residues 421–431 show a composition bias toward low complexity; it reads LAPELEPGPAL. The interval 421–440 is disordered; that stretch reads LAPELEPGPALSPRPSRDPR.

It belongs to the Orn/Lys/Arg decarboxylase class-II family. LysA subfamily. Homodimer. It depends on pyridoxal 5'-phosphate as a cofactor.

It catalyses the reaction meso-2,6-diaminopimelate + H(+) = L-lysine + CO2. The protein operates within amino-acid biosynthesis; L-lysine biosynthesis via DAP pathway; L-lysine from DL-2,6-diaminopimelate: step 1/1. Functionally, specifically catalyzes the decarboxylation of meso-diaminopimelate (meso-DAP) to L-lysine. The chain is Diaminopimelate decarboxylase from Streptomyces coelicolor (strain ATCC BAA-471 / A3(2) / M145).